Consider the following 302-residue polypeptide: tRNA pseudouridine synthase B (302 aa).

Asp-38 functions as the Nucleophile in the catalytic mechanism.

It belongs to the pseudouridine synthase TruB family. Type 1 subfamily.

It carries out the reaction uridine(55) in tRNA = pseudouridine(55) in tRNA. Functionally, responsible for synthesis of pseudouridine from uracil-55 in the psi GC loop of transfer RNAs. In Geobacillus thermodenitrificans (strain NG80-2), this protein is tRNA pseudouridine synthase B.